Consider the following 531-residue polypeptide: Glucose-6-phosphate exchanger SLC37A1 (531 aa).

A helical membrane pass occupies residues 18 to 38 (QWYRAFIFMLTFLLYASFHLS). Residues 53–72 (CTAGDGPESPFSDPSSSTRH) are disordered. 11 helical membrane passes run 100-120 (GALD…SGII), 129-149 (YLTF…LGYF), 157-177 (FYVV…PSVV), 192-214 (IMGI…AGYW), 222-242 (SFIV…LFLI), 332-352 (LCLL…PLYI), 364-384 (GELS…AGVI), 392-412 (ASTC…FSSV), 419-439 (ATIA…ALIT), 464-484 (AIID…AGLI), and 488-508 (GWSN…LFLV).

Belongs to the major facilitator superfamily. Organophosphate:Pi antiporter (OPA) (TC 2.A.1.4) family.

The protein localises to the endoplasmic reticulum membrane. It catalyses the reaction D-glucose 6-phosphate(in) + phosphate(out) = D-glucose 6-phosphate(out) + phosphate(in). With respect to regulation, inhibited by vanadate but not by chlorogenic acid. In terms of biological role, inorganic phosphate and glucose-6-phosphate antiporter. May transport cytoplasmic glucose-6-phosphate into the lumen of the endoplasmic reticulum and translocate inorganic phosphate into the opposite direction. Independent of a lumenal glucose-6-phosphatase. May not play a role in homeostatic regulation of blood glucose levels. The chain is Glucose-6-phosphate exchanger SLC37A1 from Mus musculus (Mouse).